A 124-amino-acid chain; its full sequence is Putative ankyrin repeat protein RF_1087 (124 aa).

ANK repeat units lie at residues 17–46 (NDQK…NPNI), 50–79 (NGET…IIDS), and 83–112 (FERT…TIGN).

The sequence is that of Putative ankyrin repeat protein RF_1087 from Rickettsia felis (strain ATCC VR-1525 / URRWXCal2) (Rickettsia azadi).